The primary structure comprises 94 residues: Co-chaperonin GroES (94 aa).

It belongs to the GroES chaperonin family. In terms of assembly, heptamer of 7 subunits arranged in a ring. Interacts with the chaperonin GroEL.

It is found in the cytoplasm. Its function is as follows. Together with the chaperonin GroEL, plays an essential role in assisting protein folding. The GroEL-GroES system forms a nano-cage that allows encapsulation of the non-native substrate proteins and provides a physical environment optimized to promote and accelerate protein folding. GroES binds to the apical surface of the GroEL ring, thereby capping the opening of the GroEL channel. The protein is Co-chaperonin GroES of Streptococcus pneumoniae (strain 70585).